The chain runs to 1296 residues: Protein STU1 (1296 aa).

Disordered regions lie at residues A258–D287, L735–T793, A888–A946, and T953–V972. Positions R277–D287 are enriched in polar residues. Low complexity-rich tracts occupy residues S755–S782, T900–S919, and H933–A946. Over residues T953–S964 the composition is skewed to polar residues.

This sequence belongs to the CLASP family. In terms of assembly, interacts with microtubules.

It is found in the cytoplasm. Its subcellular location is the cytoskeleton. The protein resides in the nucleus. The protein localises to the spindle. Microtubule binding protein that promotes the stabilization of dynamic microtubules. Required for mitotic spindle formation. The polypeptide is Protein STU1 (STU1) (Mycosarcoma maydis (Corn smut fungus)).